A 203-amino-acid polypeptide reads, in one-letter code: Small ribosomal subunit protein uS4 (203 aa).

Residues 93 to 156 (RRLDNVVYRL…MKVPAILEAV (64 aa)) form the S4 RNA-binding domain.

This sequence belongs to the universal ribosomal protein uS4 family. Part of the 30S ribosomal subunit. Contacts protein S5. The interaction surface between S4 and S5 is involved in control of translational fidelity.

Functionally, one of the primary rRNA binding proteins, it binds directly to 16S rRNA where it nucleates assembly of the body of the 30S subunit. With S5 and S12 plays an important role in translational accuracy. The polypeptide is Small ribosomal subunit protein uS4 (Streptococcus pyogenes serotype M1).